The chain runs to 247 residues: Granzyme B (247 aa).

An N-terminal signal peptide occupies residues 1–18 (MQPILLLLAFLLLPRADA). Positions 19–20 (GE) are cleaved as a propeptide — activation peptide. The Peptidase S1 domain occupies 21–245 (IIGGHEAKPH…FVHWIKKTMK (225 aa)). Residues C49 and C65 are joined by a disulfide bond. H64 functions as the Charge relay system in the catalytic mechanism. N-linked (GlcNAc...) asparagine glycosylation is found at N71 and N104. Catalysis depends on D108, which acts as the Charge relay system. 2 disulfide bridges follow: C142–C209 and C173–C188. Catalysis depends on S203, which acts as the Charge relay system.

This sequence belongs to the peptidase S1 family. Granzyme subfamily.

Its subcellular location is the secreted. The protein resides in the cytolytic granule. The catalysed reaction is Preferential cleavage: -Asp-|-Xaa- &gt;&gt; -Asn-|-Xaa- &gt; -Met-|-Xaa-, -Ser-|-Xaa-.. Its activity is regulated as follows. Inactivated by the serine protease inhibitor diisopropylfluorophosphate. Functionally, abundant protease in the cytosolic granules of cytotoxic T-cells and NK-cells which activates caspase-independent pyroptosis when delivered into the target cell through the immunological synapse. It cleaves after Asp. Once delivered into the target cell, acts by catalyzing cleavage of gasdermin-E (GSDME), releasing the pore-forming moiety of GSDME, thereby triggering pyroptosis and target cell death. Seems to be linked to an activation cascade of caspases (aspartate-specific cysteine proteases) responsible for apoptosis execution. Cleaves caspase-3, -9 and -10 (CASP3, CASP9 and CASP10, respectively) to give rise to active enzymes mediating apoptosis. Cleaves and activates CASP7 in response to bacterial infection, promoting plasma membrane repair. This chain is Granzyme B, found in Homo sapiens (Human).